The following is a 20-amino-acid chain: Unknown protein NF040 from 2D-PAGE (20 aa).

Residues 1–20 (MKVYTDIFTRDEFLSDSYPM) form the TCTP domain.

The protein belongs to the TCTP family.

The protein is Unknown protein NF040 from 2D-PAGE of Naegleria fowleri (Brain eating amoeba).